We begin with the raw amino-acid sequence, 374 residues long: Alginate lyase (374 aa).

Residues 1–23 (MHKTRLALSCLLGSLLLSGAVHA) form the signal peptide. Residues 62–63 (SK), 135–136 (HT), and Tyr-253 each bind substrate.

Belongs to the polysaccharide lyase 5 family.

Its subcellular location is the periplasm. It catalyses the reaction Eliminative cleavage of alginate to give oligosaccharides with 4-deoxy-alpha-L-erythro-hex-4-enuronosyl groups at their non-reducing ends and beta-D-mannuronate at their reducing end.. Functionally, catalyzes the depolymerization of alginate by cleaving the beta-1,4 glycosidic bond between two adjacent sugar residues via a beta-elimination mechanism. May serve to degrade mislocalized alginate that is trapped in the periplasmic space. This Azotobacter vinelandii (strain DJ / ATCC BAA-1303) protein is Alginate lyase.